Consider the following 426-residue polypeptide: Dihydroorotase (426 aa).

The Zn(2+) site is built by His-59 and His-61. Substrate contacts are provided by residues 61–63 and Asn-93; that span reads HLR. Zn(2+) is bound by residues Asp-151, His-178, and His-232. Asn-279 is a substrate binding site. Asp-306 contributes to the Zn(2+) binding site. Asp-306 is a catalytic residue. Residues His-310 and 324–325 each bind substrate; that span reads FG.

This sequence belongs to the metallo-dependent hydrolases superfamily. DHOase family. Class I DHOase subfamily. Requires Zn(2+) as cofactor.

The enzyme catalyses (S)-dihydroorotate + H2O = N-carbamoyl-L-aspartate + H(+). It functions in the pathway pyrimidine metabolism; UMP biosynthesis via de novo pathway; (S)-dihydroorotate from bicarbonate: step 3/3. Functionally, catalyzes the reversible cyclization of carbamoyl aspartate to dihydroorotate. This chain is Dihydroorotase, found in Brevibacillus brevis (strain 47 / JCM 6285 / NBRC 100599).